The chain runs to 205 residues: MIGRIRGLLVEKQAPEVLIDVSGVGYEIQMPLTSFYELPEIGLEAVVFTHFVVREDAQLLYGFISKQERALFRLLIKTNGVGPKLALTILSGMTAGEFVACVERDDIATLVKLPGVGKKTAERLLVEMRDKLKSLMEASVGSEREFMLQSNYTAPVVANTAEEDAIAALLSLGYKPAQASKAVSAVYVDGIDSESLIKSALKSML.

The tract at residues Met-1–Ile-64 is domain I. The tract at residues Ser-65–Glu-143 is domain II. The segment at Arg-144–Val-156 is flexible linker. A domain III region spans residues Val-157–Leu-205.

Belongs to the RuvA family. In terms of assembly, homotetramer. Forms an RuvA(8)-RuvB(12)-Holliday junction (HJ) complex. HJ DNA is sandwiched between 2 RuvA tetramers; dsDNA enters through RuvA and exits via RuvB. An RuvB hexamer assembles on each DNA strand where it exits the tetramer. Each RuvB hexamer is contacted by two RuvA subunits (via domain III) on 2 adjacent RuvB subunits; this complex drives branch migration. In the full resolvosome a probable DNA-RuvA(4)-RuvB(12)-RuvC(2) complex forms which resolves the HJ.

The protein localises to the cytoplasm. In terms of biological role, the RuvA-RuvB-RuvC complex processes Holliday junction (HJ) DNA during genetic recombination and DNA repair, while the RuvA-RuvB complex plays an important role in the rescue of blocked DNA replication forks via replication fork reversal (RFR). RuvA specifically binds to HJ cruciform DNA, conferring on it an open structure. The RuvB hexamer acts as an ATP-dependent pump, pulling dsDNA into and through the RuvAB complex. HJ branch migration allows RuvC to scan DNA until it finds its consensus sequence, where it cleaves and resolves the cruciform DNA. The polypeptide is Holliday junction branch migration complex subunit RuvA (Shewanella piezotolerans (strain WP3 / JCM 13877)).